Here is a 121-residue protein sequence, read N- to C-terminus: Anther-specific protein SF2 (121 aa).

Positions 1 to 21 (MANNSVSYLVLLLLVFVLAIS) are cleaved as a signal peptide. N-linked (GlcNAc...) asparagine glycosylation occurs at N115.

In terms of tissue distribution, epidermal anther cells.

It localises to the secreted. The protein resides in the cell wall. Anther-specific cell wall protein which could contribute to the cell wall architecture of epidermal anther cells via intermolecular disulfide bridges. The sequence is that of Anther-specific protein SF2 from Helianthus annuus (Common sunflower).